Reading from the N-terminus, the 317-residue chain is Protein phosphatase 1 regulatory subunit 3C (317 aa).

The PP1-binding motif signature appears at 84–87; that stretch reads RVVF. Residues 141 to 263 are interaction with EPM2A; that stretch reads PSSDYLSFRD…YRIVHVQWKP (123 aa). The 109-residue stretch at 149-257 folds into the CBM21 domain; that stretch reads RDRFQKNFVC…NNEAQNYRIV (109 aa).

As to quaternary structure, interacts with PPP1CC catalytic subunit of PP1 and associates with glycogen. Forms complexes with glycogen phosphorylase, glycogen synthase and phosphorylase kinase which is necessary for its regulation of PP1 activity. Also interacts with EPM2A/laforin. Post-translationally, ubiquitinated by NHLRC1/malin in a EPM2A/laforin-dependent manner.

In terms of biological role, acts as a glycogen-targeting subunit for PP1 and regulates its activity. Activates glycogen synthase, reduces glycogen phosphorylase activity and limits glycogen breakdown. Dramatically increases basal and insulin-stimulated glycogen synthesis upon overexpression in a variety of cell types. This Rattus norvegicus (Rat) protein is Protein phosphatase 1 regulatory subunit 3C.